Here is a 188-residue protein sequence, read N- to C-terminus: Protein GrpE (188 aa).

The segment covering 1–16 has biased composition (basic and acidic residues); that stretch reads MEERNEQVVEEVKEAQ. Positions 1-31 are disordered; the sequence is MEERNEQVVEEVKEAQVEEAVTPENSEETVE.

This sequence belongs to the GrpE family. As to quaternary structure, homodimer.

It localises to the cytoplasm. Functionally, participates actively in the response to hyperosmotic and heat shock by preventing the aggregation of stress-denatured proteins, in association with DnaK and GrpE. It is the nucleotide exchange factor for DnaK and may function as a thermosensor. Unfolded proteins bind initially to DnaJ; upon interaction with the DnaJ-bound protein, DnaK hydrolyzes its bound ATP, resulting in the formation of a stable complex. GrpE releases ADP from DnaK; ATP binding to DnaK triggers the release of the substrate protein, thus completing the reaction cycle. Several rounds of ATP-dependent interactions between DnaJ, DnaK and GrpE are required for fully efficient folding. This Bacillus cereus (strain G9842) protein is Protein GrpE.